We begin with the raw amino-acid sequence, 216 residues long: Urease accessory protein UreG (216 aa).

24–31 (GPVGSGKT) lines the GTP pocket.

Belongs to the SIMIBI class G3E GTPase family. UreG subfamily. Homodimer. UreD, UreF and UreG form a complex that acts as a GTP-hydrolysis-dependent molecular chaperone, activating the urease apoprotein by helping to assemble the nickel containing metallocenter of UreC. The UreE protein probably delivers the nickel.

The protein localises to the cytoplasm. Facilitates the functional incorporation of the urease nickel metallocenter. This process requires GTP hydrolysis, probably effectuated by UreG. The sequence is that of Urease accessory protein UreG from Variovorax paradoxus (strain S110).